A 202-amino-acid polypeptide reads, in one-letter code: MARQGDIHRVTGETDVKVRLDLDGSGQCQASTGVPFLDHMLHQISSHGLIDLEINAVGDTHIDDHHTNEDVGIAVGQALAQALGDRRGIHRFGHFAAPLDEALVQVALDCSGRPHLSYSLSIPSQKIGSYDTELVKEFFVAVVNNSGLTLHIRQLDGVNSHHIVEACFKAFSRALRMATEIDPRRAGAIPSSKGVLEQAGAN.

Belongs to the imidazoleglycerol-phosphate dehydratase family.

Its subcellular location is the cytoplasm. It catalyses the reaction D-erythro-1-(imidazol-4-yl)glycerol 3-phosphate = 3-(imidazol-4-yl)-2-oxopropyl phosphate + H2O. The protein operates within amino-acid biosynthesis; L-histidine biosynthesis; L-histidine from 5-phospho-alpha-D-ribose 1-diphosphate: step 6/9. This chain is Imidazoleglycerol-phosphate dehydratase, found in Parasynechococcus marenigrum (strain WH8102).